Here is a 450-residue protein sequence, read N- to C-terminus: Tubulin alpha chain (450 aa).

Q11 contacts GTP. K40 is subject to N6-acetyllysine. The GTP site is built by E71, G144, T145, T179, N206, and N228. A Mg(2+)-binding site is contributed by E71. E254 is an active-site residue.

This sequence belongs to the tubulin family. In terms of assembly, dimer of alpha and beta chains. A typical microtubule is a hollow water-filled tube with an outer diameter of 25 nm and an inner diameter of 15 nM. Alpha-beta heterodimers associate head-to-tail to form protofilaments running lengthwise along the microtubule wall with the beta-tubulin subunit facing the microtubule plus end conferring a structural polarity. Microtubules usually have 13 protofilaments but different protofilament numbers can be found in some organisms and specialized cells. The cofactor is Mg(2+). Undergoes a tyrosination/detyrosination cycle, the cyclic removal and re-addition of a C-terminal tyrosine residue by the enzymes tubulin tyrosine carboxypeptidase (TTCP) and tubulin tyrosine ligase (TTL), respectively. In terms of processing, acetylation of alpha chains at Lys-40 stabilizes microtubules and affects affinity and processivity of microtubule motors. This modification has a role in multiple cellular functions, ranging from cell motility, cell cycle progression or cell differentiation to intracellular trafficking and signaling.

Its subcellular location is the cytoplasm. It is found in the cytoskeleton. It carries out the reaction GTP + H2O = GDP + phosphate + H(+). Functionally, tubulin is the major constituent of microtubules, a cylinder consisting of laterally associated linear protofilaments composed of alpha- and beta-tubulin heterodimers. Microtubules grow by the addition of GTP-tubulin dimers to the microtubule end, where a stabilizing cap forms. Below the cap, tubulin dimers are in GDP-bound state, owing to GTPase activity of alpha-tubulin. The polypeptide is Tubulin alpha chain (TUBA) (Prunus dulcis (Almond)).